A 330-amino-acid polypeptide reads, in one-letter code: DNA-directed RNA polymerase subunit alpha (330 aa).

The alpha N-terminal domain (alpha-NTD) stretch occupies residues M1 to K232. The alpha C-terminal domain (alpha-CTD) stretch occupies residues E248–D330.

This sequence belongs to the RNA polymerase alpha chain family. As to quaternary structure, homodimer. The RNAP catalytic core consists of 2 alpha, 1 beta, 1 beta' and 1 omega subunit. When a sigma factor is associated with the core the holoenzyme is formed, which can initiate transcription.

It catalyses the reaction RNA(n) + a ribonucleoside 5'-triphosphate = RNA(n+1) + diphosphate. Its function is as follows. DNA-dependent RNA polymerase catalyzes the transcription of DNA into RNA using the four ribonucleoside triphosphates as substrates. This Porphyromonas gingivalis (strain ATCC BAA-308 / W83) protein is DNA-directed RNA polymerase subunit alpha.